The primary structure comprises 87 residues: Small ribosomal subunit protein uS19 (87 aa).

Belongs to the universal ribosomal protein uS19 family.

Protein S19 forms a complex with S13 that binds strongly to the 16S ribosomal RNA. The polypeptide is Small ribosomal subunit protein uS19 (rpsS) (Mycoplasma pneumoniae (strain ATCC 29342 / M129 / Subtype 1) (Mycoplasmoides pneumoniae)).